We begin with the raw amino-acid sequence, 306 residues long: 33 kDa chaperonin (306 aa).

2 disulfides stabilise this stretch: C242–C244 and C275–C278.

It belongs to the HSP33 family. Post-translationally, under oxidizing conditions two disulfide bonds are formed involving the reactive cysteines. Under reducing conditions zinc is bound to the reactive cysteines and the protein is inactive.

Its subcellular location is the cytoplasm. In terms of biological role, redox regulated molecular chaperone. Protects both thermally unfolding and oxidatively damaged proteins from irreversible aggregation. Plays an important role in the bacterial defense system toward oxidative stress. The polypeptide is 33 kDa chaperonin (Gloeobacter violaceus (strain ATCC 29082 / PCC 7421)).